The chain runs to 1212 residues: Probable serine/threonine-protein kinase DDB_G0284491 (1212 aa).

The helical transmembrane segment at 197–217 (LFHSFSLLNLYVYLIIVIRII) threads the bilayer. N-linked (GlcNAc...) asparagine glycosylation is found at N229, N299, N309, N328, N335, N341, N344, N391, N419, N422, N426, N427, N435, and N499. The interval 288-329 (LNNNNDNNLNNNNSNNNLNNNNNSNSNFNNDNNLNSNINSND) is disordered. Disordered regions lie at residues 412–439 (GNSN…NSGG) and 489–517 (IIKN…DYEE). The span at 489–507 (IIKNNNNNNNNNSNNNNNN) shows a compositional bias: low complexity. Acidic residues predominate over residues 508 to 517 (NDEDDSDYEE). A helical transmembrane segment spans residues 673-693 (IQIFDDYSLIIALRLLMNFIL). Pro residues predominate over residues 703-720 (VPPPPTQPSSRPQSPPTV). 2 disordered regions span residues 703–733 (VPPP…HHSG) and 751–813 (EVVS…NNNN). The region spanning 865-1182 (ETEIEPFASG…EVYNDLQDIY (318 aa)) is the Protein kinase domain. ATP-binding positions include 871 to 879 (FASGGQANI) and K924. Residue D1035 is the Proton acceptor of the active site.

This sequence belongs to the protein kinase superfamily. Ser/Thr protein kinase family.

The protein localises to the membrane. It catalyses the reaction L-seryl-[protein] + ATP = O-phospho-L-seryl-[protein] + ADP + H(+). The enzyme catalyses L-threonyl-[protein] + ATP = O-phospho-L-threonyl-[protein] + ADP + H(+). The protein is Probable serine/threonine-protein kinase DDB_G0284491 of Dictyostelium discoideum (Social amoeba).